Reading from the N-terminus, the 128-residue chain is Anion exchange transporter (128 aa).

Over 1-14 the chain is Extracellular; it reads LFSFKELNEQFKRK. The chain crosses the membrane as a helical span at residues 15–35; it reads IKVVLPVDLVLIIAASFACYC. Over 36–66 the chain is Cytoplasmic; sequence TNMENTYGLEVVGHIPRGIPPPRAPPMNILS. Residues 67–87 form a helical membrane-spanning segment; sequence AVITEAFGVALVGYAASLALA. The Extracellular segment spans residues 88–103; sequence QGSAKKFKYSVDDNQE. Residues 104–124 traverse the membrane as a helical segment; it reads FLAHGLSNVISSFLFCIPSAA. Residues 125 to 128 lie on the Cytoplasmic side of the membrane; sequence AMGR.

Belongs to the SLC26A/SulP transporter (TC 2.A.53) family. As to expression, expressed in gastric epithelium, predominantly in the gastric parietal cells but also at lower levels in mucosal cells.

The protein localises to the basolateral cell membrane. Its subcellular location is the recycling endosome membrane. It localises to the apical cell membrane. It is found in the lateral cell membrane. The enzyme catalyses chloride(in) = chloride(out). It carries out the reaction iodide(out) = iodide(in). The catalysed reaction is bromide(in) = bromide(out). It catalyses the reaction oxalate(in) = oxalate(out). The enzyme catalyses nitrate(in) = nitrate(out). It carries out the reaction sulfate(in) = sulfate(out). The catalysed reaction is D-gluconate(in) = D-gluconate(out). It catalyses the reaction thiocyanate(in) = thiocyanate(out). The enzyme catalyses hydrogencarbonate(in) = hydrogencarbonate(out). It carries out the reaction hydrogencarbonate(in) + chloride(out) = hydrogencarbonate(out) + chloride(in). Functionally, acts as an anion channel mediating the transport of chloride, bromide, iodide, nitrate, sulfate, gluconate, thiocyanate, oxalate and bicarbonate ions. Its permeability towards bicarbonate is weak and increases when pH is above 7. Mediates thiocyanate transport in retinal pigment epithelium cells. Mediates iodide transport in the thyroid gland, playing an important role in the synthesis of thyroid hormones and the maintenance of thyroid function. The protein is Anion exchange transporter of Oryctolagus cuniculus (Rabbit).